A 173-amino-acid polypeptide reads, in one-letter code: Crossover junction endodeoxyribonuclease RuvC (173 aa).

Active-site residues include Asp8, Glu67, and Asp139. Mg(2+) is bound by residues Asp8, Glu67, and Asp139.

This sequence belongs to the RuvC family. As to quaternary structure, homodimer which binds Holliday junction (HJ) DNA. The HJ becomes 2-fold symmetrical on binding to RuvC with unstacked arms; it has a different conformation from HJ DNA in complex with RuvA. In the full resolvosome a probable DNA-RuvA(4)-RuvB(12)-RuvC(2) complex forms which resolves the HJ. Mg(2+) is required as a cofactor.

It is found in the cytoplasm. It catalyses the reaction Endonucleolytic cleavage at a junction such as a reciprocal single-stranded crossover between two homologous DNA duplexes (Holliday junction).. Its function is as follows. The RuvA-RuvB-RuvC complex processes Holliday junction (HJ) DNA during genetic recombination and DNA repair. Endonuclease that resolves HJ intermediates. Cleaves cruciform DNA by making single-stranded nicks across the HJ at symmetrical positions within the homologous arms, yielding a 5'-phosphate and a 3'-hydroxyl group; requires a central core of homology in the junction. The consensus cleavage sequence is 5'-(A/T)TT(C/G)-3'. Cleavage occurs on the 3'-side of the TT dinucleotide at the point of strand exchange. HJ branch migration catalyzed by RuvA-RuvB allows RuvC to scan DNA until it finds its consensus sequence, where it cleaves and resolves the cruciform DNA. The chain is Crossover junction endodeoxyribonuclease RuvC from Yersinia enterocolitica serotype O:8 / biotype 1B (strain NCTC 13174 / 8081).